We begin with the raw amino-acid sequence, 194 residues long: Small ribosomal subunit protein uS4c (194 aa).

Positions 82 to 143 (MRLDNILFRL…KERSKVLIQN (62 aa)) constitute an S4 RNA-binding domain.

It belongs to the universal ribosomal protein uS4 family. Part of the 30S ribosomal subunit. Contacts protein S5. The interaction surface between S4 and S5 is involved in control of translational fidelity.

Its subcellular location is the plastid. The protein resides in the chloroplast. Its function is as follows. One of the primary rRNA binding proteins, it binds directly to 16S rRNA where it nucleates assembly of the body of the 30S subunit. Functionally, with S5 and S12 plays an important role in translational accuracy. This Trimezia steyermarkii (Steyermark's trimezia) protein is Small ribosomal subunit protein uS4c (rps4).